The following is a 284-amino-acid chain: Probable endonuclease 4 (284 aa).

Zn(2+)-binding residues include H69, H109, E145, D179, H182, H216, D229, H231, and E261.

This sequence belongs to the AP endonuclease 2 family. Requires Zn(2+) as cofactor.

It carries out the reaction Endonucleolytic cleavage to 5'-phosphooligonucleotide end-products.. In terms of biological role, endonuclease IV plays a role in DNA repair. It cleaves phosphodiester bonds at apurinic or apyrimidinic (AP) sites, generating a 3'-hydroxyl group and a 5'-terminal sugar phosphate. This Chlorobium phaeobacteroides (strain BS1) protein is Probable endonuclease 4.